The sequence spans 259 residues: Sugar fermentation stimulation protein homolog (259 aa).

It belongs to the SfsA family.

The sequence is that of Sugar fermentation stimulation protein homolog from Chloroflexus aurantiacus (strain ATCC 29364 / DSM 637 / Y-400-fl).